We begin with the raw amino-acid sequence, 94 residues long: Co-chaperonin GroES (94 aa).

It belongs to the GroES chaperonin family. In terms of assembly, heptamer of 7 subunits arranged in a ring. Interacts with the chaperonin GroEL.

It localises to the cytoplasm. In terms of biological role, together with the chaperonin GroEL, plays an essential role in assisting protein folding. The GroEL-GroES system forms a nano-cage that allows encapsulation of the non-native substrate proteins and provides a physical environment optimized to promote and accelerate protein folding. GroES binds to the apical surface of the GroEL ring, thereby capping the opening of the GroEL channel. In Streptococcus pneumoniae (strain ATCC BAA-255 / R6), this protein is Co-chaperonin GroES.